Reading from the N-terminus, the 220-residue chain is Phosphoenolpyruvate guanylyltransferase (220 aa).

3 residues coordinate phosphoenolpyruvate: Thr-154, Gly-169, and Ser-172.

Belongs to the CofC family.

The enzyme catalyses phosphoenolpyruvate + GTP + H(+) = enolpyruvoyl-2-diphospho-5'-guanosine + diphosphate. Its pathway is cofactor biosynthesis; coenzyme F420 biosynthesis. Guanylyltransferase that catalyzes the activation of phosphoenolpyruvate (PEP) as enolpyruvoyl-2-diphospho-5'-guanosine, via the condensation of PEP with GTP. It is involved in the biosynthesis of coenzyme F420, a hydride carrier cofactor. The sequence is that of Phosphoenolpyruvate guanylyltransferase from Mycolicibacterium paratuberculosis (strain ATCC BAA-968 / K-10) (Mycobacterium paratuberculosis).